The following is a 1480-amino-acid chain: ABC transporter G family member 49 (1480 aa).

Residues 1-18 are compositionally biased toward polar residues; the sequence is MHTTTQATPQKSMVMTTT. 3 disordered regions span residues 1 to 42, 60 to 81, and 104 to 124; these read MHTT…AGSS, VSGE…EDDE, and SSTR…GGAA. Composition is skewed to gly residues over residues 63–73 and 107–123; these read ELGGGGGGGGG and RGGG…GGGA. The 274-residue stretch at 212–485 folds into the ABC transporter 1 domain; it reads LAAKLGFSHH…FESCGFKCPE (274 aa). 245–252 lines the ATP pocket; that stretch reads GPPGCGKT. In terms of domain architecture, ABC transmembrane type-2 1 spans 563–775; sequence HLLKACFDRE…AEIGLTGNEF (213 aa). Transmembrane regions (helical) follow at residues 581 to 601, 619 to 639, 656 to 676, 699 to 719, 725 to 745, and 811 to 831; these read FLHI…GTVF, SLFY…VMSI, GWAY…VAAL, LLVL…VGSY, VGPI…GFLI, and VAAL…GLTI. The ABC transporter 2 domain maps to 877–1129; sequence ISFQDVNYYV…KVIQYFQSIP (253 aa). Residue 922–929 coordinates ATP; sequence GVTGAGKT. The 217-residue stretch at 1202-1418 folds into the ABC transmembrane type-2 2 domain; sequence EQFKACLWKQ…TLNLLFTTQF (217 aa). A run of 7 helical transmembrane segments spans residues 1226–1246, 1254–1274, 1311–1331, 1340–1360, 1368–1388, 1396–1416, and 1449–1469; these read IVFM…QGNI, GLFT…INNS, IPYV…TIGY, WFFY…MLIV, VASI…GFVM, WWIW…LFTT, and LLPL…ILYG.

This sequence belongs to the ABC transporter superfamily. ABCG family. PDR (TC 3.A.1.205) subfamily.

Its subcellular location is the membrane. Its function is as follows. May be a general defense protein. In Oryza sativa subsp. japonica (Rice), this protein is ABC transporter G family member 49.